The following is a 277-amino-acid chain: Large ribosomal subunit protein uL2c (277 aa).

2 disordered regions span residues 36 to 56 and 225 to 259; these read NKHS…HRGG and MNSV…GSKS.

It belongs to the universal ribosomal protein uL2 family. Part of the 50S ribosomal subunit.

It localises to the plastid. The protein localises to the chloroplast. The sequence is that of Large ribosomal subunit protein uL2c (rpl2) from Psilotum nudum (Whisk fern).